A 186-amino-acid polypeptide reads, in one-letter code: Casparian strip membrane protein 3 (186 aa).

Residues M1 to S26 are Cytoplasmic-facing. Residues V27 to M47 traverse the membrane as a helical segment. Residues G48–T74 are Extracellular-facing. N-linked (GlcNAc...) asparagine glycosylation is present at N51. Residues F75–I95 traverse the membrane as a helical segment. The Cytoplasmic portion of the chain corresponds to V96–R107. A helical transmembrane segment spans residues L108–A128. Over A129–S161 the chain is Extracellular. The chain crosses the membrane as a helical span at residues L162–A182. The Cytoplasmic segment spans residues L183 to R186.

The protein belongs to the Casparian strip membrane proteins (CASP) family. As to quaternary structure, homodimer and heterodimers.

The protein resides in the cell membrane. Regulates membrane-cell wall junctions and localized cell wall deposition. Required for establishment of the Casparian strip membrane domain (CSD) and the subsequent formation of Casparian strips, a cell wall modification of the root endodermis that determines an apoplastic barrier between the intraorganismal apoplasm and the extraorganismal apoplasm and prevents lateral diffusion. This is Casparian strip membrane protein 3 from Sorghum bicolor (Sorghum).